The sequence spans 302 residues: Sulfate adenylyltransferase subunit 2 (302 aa).

This sequence belongs to the PAPS reductase family. CysD subfamily. As to quaternary structure, heterodimer composed of CysD, the smaller subunit, and CysN.

The enzyme catalyses sulfate + ATP + H(+) = adenosine 5'-phosphosulfate + diphosphate. Its pathway is sulfur metabolism; hydrogen sulfide biosynthesis; sulfite from sulfate: step 1/3. Functionally, with CysN forms the ATP sulfurylase (ATPS) that catalyzes the adenylation of sulfate producing adenosine 5'-phosphosulfate (APS) and diphosphate, the first enzymatic step in sulfur assimilation pathway. APS synthesis involves the formation of a high-energy phosphoric-sulfuric acid anhydride bond driven by GTP hydrolysis by CysN coupled to ATP hydrolysis by CysD. This Escherichia coli O1:K1 / APEC protein is Sulfate adenylyltransferase subunit 2.